A 38-amino-acid chain; its full sequence is Very early lactation protein (38 aa).

Homodimer. Post-translationally, O-glycosylated. Contains sialic acid residues. As to expression, found in the whey fraction of milk (at protein level).

The protein resides in the secreted. The polypeptide is Very early lactation protein (Trichosurus vulpecula (Brush-tailed possum)).